Consider the following 321-residue polypeptide: Beta-ketoacyl-[acyl-carrier-protein] synthase III (321 aa).

Residues Cys113 and His248 contribute to the active site. Residues 249–253 form an ACP-binding region; that stretch reads QANAR. Asn278 is a catalytic residue.

It belongs to the thiolase-like superfamily. FabH family. Homodimer.

The protein localises to the cytoplasm. The catalysed reaction is malonyl-[ACP] + acetyl-CoA + H(+) = 3-oxobutanoyl-[ACP] + CO2 + CoA. Its pathway is lipid metabolism; fatty acid biosynthesis. In terms of biological role, catalyzes the condensation reaction of fatty acid synthesis by the addition to an acyl acceptor of two carbons from malonyl-ACP. Catalyzes the first condensation reaction which initiates fatty acid synthesis and may therefore play a role in governing the total rate of fatty acid production. Possesses both acetoacetyl-ACP synthase and acetyl transacylase activities. Its substrate specificity determines the biosynthesis of branched-chain and/or straight-chain of fatty acids. This Erythrobacter litoralis (strain HTCC2594) protein is Beta-ketoacyl-[acyl-carrier-protein] synthase III.